A 148-amino-acid chain; its full sequence is Putative nickel-responsive regulator (148 aa).

Ni(2+)-binding residues include His88, His99, His101, and Cys107.

Belongs to the transcriptional regulatory CopG/NikR family. It depends on Ni(2+) as a cofactor.

Its function is as follows. Transcriptional regulator. The polypeptide is Putative nickel-responsive regulator (Helicobacter pylori (strain Shi470)).